A 246-amino-acid polypeptide reads, in one-letter code: Glutamate/aspartate import permease protein GltJ (246 aa).

The 202-residue stretch at 29–230 folds into the ABC transmembrane type-1 domain; it reads FQVTIALSIC…LINAFIMLVM (202 aa). A run of 5 helical transmembrane segments spans residues 33-53, 74-94, 104-124, 179-196, and 212-232; these read IALS…FGIL, NVPL…LLPE, LDPN…FTAA, LVKN…DMAA, and FTAI…VMTL.

The protein belongs to the binding-protein-dependent transport system permease family. HisMQ subfamily. In terms of assembly, the complex is composed of two ATP-binding proteins (GltL), two transmembrane proteins (GltJ and GltK) and a solute-binding protein (GltI).

It is found in the cell inner membrane. Its function is as follows. Part of the ABC transporter complex GltIJKL involved in glutamate and aspartate uptake. Probably responsible for the translocation of the substrate across the membrane. This chain is Glutamate/aspartate import permease protein GltJ (gltJ), found in Escherichia coli O6:H1 (strain CFT073 / ATCC 700928 / UPEC).